Reading from the N-terminus, the 146-residue chain is Hemoglobin subunit beta (146 aa).

V1 is subject to N-acetylvaline. Residues H2–H146 form the Globin domain. A Phosphothreonine modification is found at T12. Position 44 is a phosphoserine (S44). Position 59 is an N6-acetyllysine (K59). Heme b is bound at residue H63. K82 carries the N6-acetyllysine modification. H92 lines the heme b pocket. At C93 the chain carries S-nitrosocysteine. At K144 the chain carries N6-acetyllysine.

It belongs to the globin family. As to quaternary structure, heterotetramer of two alpha chains and two beta chains. In terms of tissue distribution, red blood cells.

In terms of biological role, involved in oxygen transport from the lung to the various peripheral tissues. This chain is Hemoglobin subunit beta (HBB), found in Hylobates lar (Lar gibbon).